Consider the following 42-residue polypeptide: Photosystem I reaction center subunit IX (42 aa).

Residues 7 to 27 (YLSTAPVLATLWFGFLAGLLI) traverse the membrane as a helical segment.

The protein belongs to the PsaJ family.

The protein resides in the plastid. It localises to the chloroplast thylakoid membrane. In terms of biological role, may help in the organization of the PsaE and PsaF subunits. This is Photosystem I reaction center subunit IX from Psilotum nudum (Whisk fern).